The following is a 246-amino-acid chain: Probable transcriptional regulatory protein CLD_1467 (246 aa).

This sequence belongs to the TACO1 family.

It is found in the cytoplasm. This Clostridium botulinum (strain Okra / Type B1) protein is Probable transcriptional regulatory protein CLD_1467.